The following is a 4004-amino-acid chain: MPQRNEPIAVIGSACQFPGHSTTPSKLWELLREPRDLLQTIPSDRFNAESWYHADSAHHGTSNVTKSYFLAEDPKAFDSQFFNIPPKECEAIDPQQRLLMETVYDSLCAAGLSMESLRGSSTACYVGQMCDDWSGIMMRDWDSLPQYTATGISRSIMSNRVSYFFDWHGPSMTIDTACSSSLVAVHEAVQTLRSGDSNVAVACGANLILSPGMYIAESKLKMLSPDGRSRMWDEGANGYARGEGIAAVVLKTLSQALADGDHIECIVRETGFNQDGRTTGITMPSNVAQAALIRDTYKKAGLDPFNPKDRPQFFHAHGTGTPAGDPQEAEAISRAFFKDGEKADNKLYVGSIKTIIGHTEGTAGLASLIGTSLAMQHRTVPPNMHFTKLADRVAPFYTNLEVPTAAKPWPAAPAGQPLRASVNSFGFGGANAHAILESYEPEVHSAPAAGALPLFTPITFSANSEKSLQAMLASYSDFLKTNEPINVRDVAWTHQTRLSALAFRTAVAGQTAAEIVNSIDAALEKKENLGIRASGVEKPSILGVFTGQGAQWPTMGAALIKASPYARDTIAAMDRSLQELPEADRPSWSIRAELEAPKESSRLAEAALSQPLCTAVQVVLVDLIKAAGIKFKAVVGHSSGEIGAAYAAGLVSASDAIRIAYYRGVYAKLAGSKSGAKGAMMAVGTSLEDAREFCELEEFEGRLTVAASNAASSVTLSGDEDAIDQAEEIFKDESKFARKLRVDTAYHSFHMIPCSEPYKKALDGCGVEIGDVTSTTWFSSVVPGTKMSKETLGSQYWVDNMKNTVLFSQAITAAVKEAGPFDLAIEVGPHPALKGPCLNNIEDASGNAETPYTGLLSRGGDDVNAFSAALGFIWERFGASAVDFDAYDKLVSGSSEPKSLAVDLPRYPWDHDRTYWFESRVSAGYKYREEPPHPILGVKSIEGTTGPQVQWRNILTQREVSWMPGHKLQGQTVFPAAGYVSMAIEAVMTLAGENSVQLIELSDFVIGRAISFFDESAAQEVMFTLNVTKNTEEAISATFEVTSCPQGERQMSHNANGTISITLGIPSPDTLAAVPVQQFNMVDVEVDRFYKALSDMGYHYSPPFKAMSNIRRRVDAAVGEMTDVRGDHWEDNLLLHPGLLDTSFQAIFAAFSSPGDERLWSIHVPTIIKRMTFNPAVASFPPGEETVWPWQAAITSGPHQTLRADIEVFAENGEDVLFEVEGISMVPFSNATAENDCHLFSNFVYDIDGPSGELAGPNHPTDFDVKLATDSERFSFYWMRTLLETITPEEEEQTLIHYKRMLKWCRFVFDQVKNGEHPHVKPEALNDTLDVVEKLVEQYGQRADIDLIRAVGEDLPMKIRTNGNIVETMVRDGMLDAFYEEGLGLHIANNWEANMAVQLTHRYPRMNVLEIGGGTGGSTRIILPRLGQNFSSYTFTDVSAGFFEAAEERFKEFADRMIFKTLDMEKDITEQGFQEGHYDMILASNVLHVGADLDATMSNVRRLLKPGGWLINMETVTFYPCLRNGFAMAGLSGWWIGADTGRPWGPTIDIAEWDKVYKRTGFSGVDTYAPNFDSLHPFSVMAAQAVDERVQFLRQPLETEPADAKKEELVVIGGQTEEVSEIVDRVVELLTPRFSSVTRVESVDAFADGSATVPTCVLNLSELDVPVMQELMDDQPDKFEALKEIFSSARDILWVTKGSRAENPHARMIVNMARAIRKEIPSVNFQNLDVEVLDEGSADLFAATMLRHQALHRWEKELLPGSFRWSKEPEMHLENGKIYIPRLKSVKEMNDRYNSTKRQITHEVNAKDARIELVGTKDSYELREPSPLKPALDAEGKVIVKVSKSLLQSVKVPTAGYYFLCYGTTESGESVIAFSDSSESVVAVPQNWTIPQPPKVDASKALLSVAANILADLVITVAPAQGTLLAHDPDPIVAAALSKQAATKRIRVFFTTTQADKKGPNWIYIHPHSPRRLLKKTLPKGVSLFINLSGREDSKLMKEISEYLPAGCTLSDQSPFFSNTVESRPAANPELVAKYLSTGWAKAKATSFAIPGTKTVLPLKDVPGHPGKAEQLSVVDWEADAVVPVSVQPIDTGDNLFKPDRTYFMVGLSGEVGQSITQWMVRHGARYVVLTSRNPKVNSEWIETLEDEYNAVIKTMSLDVTDQSSLHACYDKISRTMPPIAGVAHGAMVLIDSLFQNMDYEDLMTVLRPKILGAMYLDELFSEDTLDFFILFSSITGTVGNTGQSNYIGANAFMEALGLQRRRRGLAASILGISSLVGIGYVERAENFDAEYFAKSGYRNISEQDLHMLFAEAIVRGRPESKENHEIITGIVPTYADKDSKAGYLQDIKFSHLALERSQARNDGDDSASVPVRIQLQTAVTKDEVVEIMQAGFVARIKKVLRIPAEDEFSLTASLVEQGVDSLVAVEVRSWFLKEVDVDMPVLKVLGGASIADLLNDALDRLAPEIVPNLGADPSSVSRPPVAPAPVPSVSRPASNAPPVLNKQLPLPSSAAELKAEREREAEAKRKREEERRAAELARKAAEEAKRAEELRKARERRESREQQKADVLKKARDALIKSEITEPMSFGQSRFWFLDQVLRDRTTFNMAISVRLEGRIRAEDMKKAVQAVVLRHEALRTRYFTTGEHGDAPMQGIIPDPSFVPFMHKRIKTEGEAQKELDAVRAHVWDMNSWAGIRVHLLSMPSDRAHFLIIGCHHIAMDGVSLNIFYADLEKAYKGKSLPALPLASQYRAFARQQRLDYAAGKMDADLAFYRAMIPEPQTVKPLPLFPFARVRDRVPLETYAEVSATARIDATLTSAIRAAARELRATTFHFYLAALQVLVFKLLEKKDPGCRDFFLGIADANRTDAKFMGTLGFFLNLLPLRCERGEDSAPFGDVVKAARAKAYAALERSRLPFDVLLERLDALPRSAAHAPLFQVFVDYRQGVQERQRYMGVKAAGEDWYTARTGYDVSLDVIENAAGDSRLEFKLQEALYDAEGARLLMQAYVHVLRQCAERPGREWGAVEVWPREVVERAVSVGRVPSPKYEWPATVGHQIDEIIKRHTASLAIKDGRGNVLTYAQMDDRVNSIAAALIENGAADGGRVGVFQNPTADWICSVVAIFRAGAVYIPLDLRNPLKRLASIVEAARPAAILAHSETWDKVEALGGTDSKAINVSALPDSHQPVANRAKTDGPAVILFTSGSTGTPKGMHMSHANLVKHMEVWTKQATLPEGATKLVLQQSAYTFDKSLEQILTPITMGGALYVVPAEQRGDPVSITDIIVSEGVTYTDATPSEYLMWFRYAGETLKKAKSWMFAVTAGEAVTESLLAEFRKLDLPVTLVNNYGPAEATLDATLEELPYRTMKPGDQISAGYPLPGYSVYIVDEDLKPVPIGCPGEVILAGVGIVGGYLNKPELTAQKFVPDVFANNGGIMYRTGDRGRLSDKGQLLYEGRIEGDTQIKLRGVRMELEDVEASIMSTANGALSRAVVSLRGEEGSEFLVAHVVFAPNFTVDQAVFINRLPTTLPLPQYMVPALFAVVDTLPLTPHLKVDRKAVKSLAIPDQAPKAPTTTANLTPTESRLAAIWQQMIPGAPAALSPDTEFFHIGGNSLLLVKLQALIRQTFGAQLRLIDVMDAASLAGMARAIDDATGGAQQQSPTTATTIDWAAEAAVPGDLATKIHLPASTASTPPKKSTDLTIVLTGATGLLGRNLLKHLAADPRVKRIYAVAVRPSPSSSAAPVSRIPLLSDKLVTKSGDLTLPLLGLSPADAAALAAEADVFVHVAANRSFWDAYASLRAANVGAVKDIVALAAARRVPVHFVSSGEVGKYSALTPPPGDGSDGYVASKWAAERFLENAAAEMAGLQVIVHRPLKPDGAEARPAPEDVLGELVWLAKGLGRRPVLEGLAGSLGVVPIVDVVEGVAQALFGAGDGLEREGELKVMRHVATMNVDIGAFAESVAADGELMELEGMDALTWTGEAKKAGWSMFMVSQEIVMAKGGEVVVSKR.

In terms of domain architecture, Ketosynthase family 3 (KS3) spans 5 to 438 (NEPIAVIGSA…GANAHAILES (434 aa)). Residues C178, H317, and H358 each act as for beta-ketoacyl synthase activity in the active site. Residues 544-867 (VFTGQGAQWP…RGGDDVNAFS (324 aa)) enclose the Malonyl-CoA:ACP transacylase (MAT) domain. Residues 933 to 1066 (HPILGVKSIE…GTISITLGIP (134 aa)) are N-terminal hotdog fold. Residues 933 to 1233 (HPILGVKSIE…SMVPFSNATA (301 aa)) form a dehydratase (DH) domain region. A PKS/mFAS DH domain is found at 933–1234 (HPILGVKSIE…MVPFSNATAE (302 aa)). H966 functions as the Proton acceptor; for dehydratase activity in the catalytic mechanism. A C-terminal hotdog fold region spans residues 1081-1234 (MVDVEVDRFY…MVPFSNATAE (154 aa)). D1141 (proton donor; for dehydratase activity) is an active-site residue. The segment at 1289–1575 (EEEEQTLIHY…DTYAPNFDSL (287 aa)) is methyltransferase (MT) domain. The Ketoreductase (KR) domain occupies 2102 to 2272 (TYFMVGLSGE…RRGLAASILG (171 aa)). The 79-residue stretch at 2384–2462 (EVVEIMQAGF…DLLNDALDRL (79 aa)) folds into the Carrier 1 domain. S2422 bears the O-(pantetheine 4'-phosphoryl)serine mark. The segment at 2471 to 2540 (GADPSSVSRP…ERRAAELARK (70 aa)) is disordered. Residues 2488-2500 (PSVSRPASNAPPV) are compositionally biased toward low complexity. Positions 2514 to 2540 (LKAEREREAEAKRKREEERRAAELARK) are enriched in basic and acidic residues. Residues 2584 to 3019 (PMSFGQSRFW…RQCAERPGRE (436 aa)) form a condensation (C) domain region. An adenylation (A) (KR) domain region spans residues 3060-3459 (KRHTASLAIK…GRIEGDTQIK (400 aa)). The region spanning 3570-3647 (ANLTPTESRL…GMARAIDDAT (78 aa)) is the Carrier 2 domain. Residue S3607 is modified to O-(pantetheine 4'-phosphoryl)serine. The segment at 3694–3924 (LTIVLTGATG…VVEGVAQALF (231 aa)) is reductase (RED) domain.

The protein in the C-terminal section; belongs to the NRP synthetase family. The cofactor is pantetheine 4'-phosphate.

Its pathway is secondary metabolite biosynthesis. Its function is as follows. Hybrid PKS-NRPS synthetase; part of the gene cluster that mediates the biosynthesis of macrophasetins, 3-decalinoyltetramic acids (DTAs) which feature a tetramate (pyrrolidine-2,4-dione) unit connected to a decalin fragment and that have potent bioactivities. The PKS-NRPS mpsA together with its associated enoylreductase partner mpsG incorporate one unit of acetyl-CoA, seven units of malonyl-CoA, and one unit of L-alanine to assemble the linear tetramic acid intermediate corresponding to the backbone of macrophasetins. Without the Diels-Alderase mpsD, the mpsA/G product can undergo the non-enzymatic intramolecular Diels-Alder (IMDA) reaction to generate both macrophasetin A and macrophasetin B. Catalyzed by mpsD, the linear tetramic acid intermediate is thoroughly converted to macrophasetin A via the endo-IMDA reaction in a regioselective and stereoselective manner. Finally, the cytochrome P450 monooxygenase mpsF catalyzes the hydroxylation at C20 to yield the end product macrophasetin C. This chain is Hybrid PKS-NRPS synthetase mpsA, found in Macrophomina phaseolina (strain MS6) (Charcoal rot fungus).